Reading from the N-terminus, the 127-residue chain is Large ribosomal subunit protein bL12 (127 aa).

N6-methyllysine is present on residues K77 and K88.

This sequence belongs to the bacterial ribosomal protein bL12 family. Homodimer. Part of the ribosomal stalk of the 50S ribosomal subunit. Forms a multimeric L10(L12)X complex, where L10 forms an elongated spine to which 2 to 4 L12 dimers bind in a sequential fashion. Binds GTP-bound translation factors.

In terms of biological role, forms part of the ribosomal stalk which helps the ribosome interact with GTP-bound translation factors. Is thus essential for accurate translation. This Nitratidesulfovibrio vulgaris (strain DSM 19637 / Miyazaki F) (Desulfovibrio vulgaris) protein is Large ribosomal subunit protein bL12.